A 260-amino-acid chain; its full sequence is Large ribosomal subunit protein uL4 (260 aa).

It belongs to the universal ribosomal protein uL4 family. As to quaternary structure, part of the 50S ribosomal subunit.

One of the primary rRNA binding proteins, this protein initially binds near the 5'-end of the 23S rRNA. It is important during the early stages of 50S assembly. It makes multiple contacts with different domains of the 23S rRNA in the assembled 50S subunit and ribosome. Its function is as follows. Forms part of the polypeptide exit tunnel. The polypeptide is Large ribosomal subunit protein uL4 (Methanopyrus kandleri (strain AV19 / DSM 6324 / JCM 9639 / NBRC 100938)).